Reading from the N-terminus, the 296-residue chain is Light-independent protochlorophyllide reductase iron-sulfur ATP-binding protein (296 aa).

Residues 39-44 (GIGKST) and lysine 68 each bind ATP. Serine 43 contributes to the Mg(2+) binding site. Cysteine 124 and cysteine 158 together coordinate [4Fe-4S] cluster. 209–210 (NR) serves as a coordination point for ATP.

Belongs to the NifH/BchL/ChlL family. As to quaternary structure, homodimer. Protochlorophyllide reductase is composed of three subunits; ChlL, ChlN and ChlB. It depends on [4Fe-4S] cluster as a cofactor.

It carries out the reaction chlorophyllide a + oxidized 2[4Fe-4S]-[ferredoxin] + 2 ADP + 2 phosphate = protochlorophyllide a + reduced 2[4Fe-4S]-[ferredoxin] + 2 ATP + 2 H2O. The protein operates within porphyrin-containing compound metabolism; chlorophyll biosynthesis (light-independent). Component of the dark-operative protochlorophyllide reductase (DPOR) that uses Mg-ATP and reduced ferredoxin to reduce ring D of protochlorophyllide (Pchlide) to form chlorophyllide a (Chlide). This reaction is light-independent. The L component serves as a unique electron donor to the NB-component of the complex, and binds Mg-ATP. The protein is Light-independent protochlorophyllide reductase iron-sulfur ATP-binding protein of Prochlorococcus marinus (strain MIT 9313).